A 212-amino-acid chain; its full sequence is Protein Thf1 (212 aa).

A coiled-coil region spans residues 179–201 (ERMEQAVELMQETLAADRRKKEK).

This sequence belongs to the THF1 family.

In terms of biological role, may be involved in photosynthetic membrane biogenesis. This Parasynechococcus marenigrum (strain WH8102) protein is Protein Thf1.